A 2381-amino-acid polypeptide reads, in one-letter code: Nipped-B-like protein A (2381 aa).

An HEAT 1 repeat occupies 85 to 124 (SDELEGDVPVLLQLLMSRNPNIFRNKTAPNTPQYPAQAGI). 3 disordered regions span residues 131 to 211 (PPYK…HLQQ), 240 to 289 (HLLQ…DIVG), and 329 to 503 (LAAI…ELPP). The span at 138 to 158 (GSMQGSPASANYQQASMSHSP) shows a compositional bias: polar residues. Composition is skewed to basic and acidic residues over residues 254 to 273 (GTKD…KSSE) and 333 to 355 (ERME…DKDK). The span at 373 to 389 (GTAGSGSGAPGGGGGAN) shows a compositional bias: gly residues. The span at 451–473 (VKHEHDHDPEHPHYDDKQPDTPR) shows a compositional bias: basic and acidic residues. The short motif at 552–565 (KKSVKPVVVLQKLS) is the PxVxL motif element. Residues 570-580 (QRLMRERDSRA) are compositionally biased toward basic and acidic residues. 2 disordered regions span residues 570-604 (QRLM…SVLK) and 629-708 (RKRS…NEVA). The span at 581–592 (SKSGKNRLSSGR) shows a compositional bias: polar residues. Basic and acidic residues-rich tracts occupy residues 633-642 (TVNERPKYAE) and 658-694 (KDRD…RYDD). HEAT repeat units follow at residues 1299 to 1337 (SQSF…VDPS), 1375 to 1413 (PQLT…EQPN), 1477 to 1516 (YDWF…HILK), and 1843 to 1881 (LIHP…KYTG). Disordered regions lie at residues 2005–2095 (IPGR…DLDD) and 2228–2271 (LLGG…GDSA). The span at 2006–2021 (PGRKSRKRRRRRRRPQ) shows a compositional bias: basic residues. Basic and acidic residues predominate over residues 2040–2056 (EEERGAQDEERERHSGD). The segment covering 2057–2068 (EEYDDDDYEEDE) has biased composition (acidic residues). Over residues 2077–2086 (KPTEDIRQSE) the composition is skewed to basic and acidic residues.

This sequence belongs to the SCC2/Nipped-B family.

Its subcellular location is the nucleus. Functionally, may play a structural role in chromatin. Involved in sister chromatid cohesion, possibly by facilitating the cohesin complex loading. Transcription factor, which may promote cortical neuron migration during brain development by regulating the transcription of crucial genes in this process. The polypeptide is Nipped-B-like protein A (nipbla) (Danio rerio (Zebrafish)).